Consider the following 284-residue polypeptide: D-tagatose-1,6-bisphosphate aldolase subunit GatY (284 aa).

Residue Asp82 is the Proton donor of the active site. Residues His83 and His180 each coordinate Zn(2+). Gly181 is a dihydroxyacetone phosphate binding site. His208 provides a ligand contact to Zn(2+). Residues 209-211 and 230-233 each bind dihydroxyacetone phosphate; these read GAS and NVAT.

It belongs to the class II fructose-bisphosphate aldolase family. TagBP aldolase GatY subfamily. Forms a complex with GatZ. Requires Zn(2+) as cofactor.

The enzyme catalyses D-tagatofuranose 1,6-bisphosphate = D-glyceraldehyde 3-phosphate + dihydroxyacetone phosphate. Its pathway is carbohydrate metabolism; D-tagatose 6-phosphate degradation; D-glyceraldehyde 3-phosphate and glycerone phosphate from D-tagatose 6-phosphate: step 2/2. Its function is as follows. Catalytic subunit of the tagatose-1,6-bisphosphate aldolase GatYZ, which catalyzes the reversible aldol condensation of dihydroxyacetone phosphate (DHAP or glycerone-phosphate) with glyceraldehyde 3-phosphate (G3P) to produce tagatose 1,6-bisphosphate (TBP). Requires GatZ subunit for full activity and stability. Is involved in the catabolism of galactitol. This chain is D-tagatose-1,6-bisphosphate aldolase subunit GatY, found in Shigella flexneri.